The primary structure comprises 266 residues: 4-hydroxy-tetrahydrodipicolinate reductase (266 aa).

Residues 7–12 (GTIGRM), Glu-33, 96–98 (GTT), and 120–123 (APNM) each bind NAD(+). His-153 acts as the Proton donor/acceptor in catalysis. A (S)-2,3,4,5-tetrahydrodipicolinate-binding site is contributed by His-154. Residue Lys-157 is the Proton donor of the active site. (S)-2,3,4,5-tetrahydrodipicolinate is bound at residue 163 to 164 (GT).

The protein belongs to the DapB family.

Its subcellular location is the cytoplasm. The catalysed reaction is (S)-2,3,4,5-tetrahydrodipicolinate + NAD(+) + H2O = (2S,4S)-4-hydroxy-2,3,4,5-tetrahydrodipicolinate + NADH + H(+). It carries out the reaction (S)-2,3,4,5-tetrahydrodipicolinate + NADP(+) + H2O = (2S,4S)-4-hydroxy-2,3,4,5-tetrahydrodipicolinate + NADPH + H(+). Its pathway is amino-acid biosynthesis; L-lysine biosynthesis via DAP pathway; (S)-tetrahydrodipicolinate from L-aspartate: step 4/4. In terms of biological role, catalyzes the conversion of 4-hydroxy-tetrahydrodipicolinate (HTPA) to tetrahydrodipicolinate. The chain is 4-hydroxy-tetrahydrodipicolinate reductase from Polynucleobacter necessarius subsp. necessarius (strain STIR1).